The following is a 437-amino-acid chain: Homogentisate 1,2-dioxygenase (437 aa).

H295 functions as the Proton acceptor in the catalytic mechanism. Fe cation is bound by residues H338 and E344. Residues Y353 and H374 each contribute to the homogentisate site. H374 is a binding site for Fe cation.

The protein belongs to the homogentisate dioxygenase family. Hexamer; dimer of trimers. It depends on Fe cation as a cofactor.

It catalyses the reaction homogentisate + O2 = 4-maleylacetoacetate + H(+). It functions in the pathway amino-acid degradation; L-phenylalanine degradation; acetoacetate and fumarate from L-phenylalanine: step 4/6. Functionally, involved in the catabolism of homogentisate (2,5-dihydroxyphenylacetate or 2,5-OH-PhAc), a central intermediate in the degradation of phenylalanine and tyrosine. Catalyzes the oxidative ring cleavage of the aromatic ring of homogentisate to yield maleylacetoacetate. This chain is Homogentisate 1,2-dioxygenase, found in Myxococcus xanthus (strain DK1622).